We begin with the raw amino-acid sequence, 88 residues long: Putative carnobacteriocin-BM1 immunity protein (88 aa).

Functionally, could impart immunity to carnobacteriocin-BM1 to naturally sensitive host strains. This Carnobacterium maltaromaticum (Carnobacterium piscicola) protein is Putative carnobacteriocin-BM1 immunity protein.